Here is a 529-residue protein sequence, read N- to C-terminus: Bifunctional purine biosynthesis protein PurH (529 aa).

One can recognise an MGS-like domain in the interval 1–148 (MQQRRPIRRA…KNHKDVAIVV (148 aa)). Lys-287 carries the N6-acetyllysine modification.

Belongs to the PurH family.

It carries out the reaction (6R)-10-formyltetrahydrofolate + 5-amino-1-(5-phospho-beta-D-ribosyl)imidazole-4-carboxamide = 5-formamido-1-(5-phospho-D-ribosyl)imidazole-4-carboxamide + (6S)-5,6,7,8-tetrahydrofolate. The enzyme catalyses IMP + H2O = 5-formamido-1-(5-phospho-D-ribosyl)imidazole-4-carboxamide. The protein operates within purine metabolism; IMP biosynthesis via de novo pathway; 5-formamido-1-(5-phospho-D-ribosyl)imidazole-4-carboxamide from 5-amino-1-(5-phospho-D-ribosyl)imidazole-4-carboxamide (10-formyl THF route): step 1/1. Its pathway is purine metabolism; IMP biosynthesis via de novo pathway; IMP from 5-formamido-1-(5-phospho-D-ribosyl)imidazole-4-carboxamide: step 1/1. The protein is Bifunctional purine biosynthesis protein PurH of Escherichia coli O139:H28 (strain E24377A / ETEC).